Consider the following 293-residue polypeptide: MALTPTNLNNEMSLPMKMDCQEQELTEKNNSFFQKLNVTKSVMQDLLKEIIKVDYILDRSDDEDDISSENPQTDFLHKGMLELEAKHDQDLGKQDEQETDVDEYPQASTSLQFSKKNLLEFLLKDMLTLKGQIDKLEDRGLDLDQGTNTEVNARNEVYELKKKVMESLEDLCKNVELLSAKLRMYQMEGENTDSHSSEETDMEEMETLLPQAPASFLVQNSPPPNTVWKCALRIFIMFYVLTVTGLLCYILFFGATFLFERVLLRMLGCRTTWDLREMIEPFLNSEVEALLPS.

Residues 116–188 (KNLLEFLLKD…SAKLRMYQME (73 aa)) adopt a coiled-coil conformation. A helical membrane pass occupies residues 234-254 (IFIMFYVLTVTGLLCYILFFG).

Its subcellular location is the membrane. The polypeptide is Single-pass membrane and coiled-coil domain-containing protein 2 (SMCO2) (Macaca fascicularis (Crab-eating macaque)).